Consider the following 473-residue polypeptide: MPSSTPGGSLKHLSDLTPPSQDRTWLTSSHPRLPIAATCCADKSVRVYSLVNFTLLSTISGGHKRSVRSCAWKPHVKGESVLATASFDATVGVWRRWDGFGRAERDMLGLAGGLAEADRQEGDDTDGDEEDEDEEWGFAVLLDGHDSEVKSVSWSSGGSLLATCSRDKSIWIWEDLEDGDNNFETVAVLQEHSGDVKWVAWHPEEECLASGSYDDTIRLWREDVDDWGQVACLRGHEGTVWCVEWEAPTSIAGDNGDGAPTTMPIDPENGKLAPCERKKWIEERSMSGPRLVSCSDDKTIRIWRKQPQEKPPPVQYSSIPSTIRPATIDETWIEECQLPAMHDLSIYSVAWSKKTGLIASTGADGRIVIYQERFTSKPPVHTTSEQDKPDSARETQKANGERTAPSTAWEVVACVDAAHEIYEVNHVCWAKRADQRKSQQQNFDNSEMDHANEEEVLLSTGDDGVVRVWTLER.

A disordered region spans residues 1-25 (MPSSTPGGSLKHLSDLTPPSQDRTW). 2 WD repeats span residues 11 to 58 (KHLS…LLST) and 62 to 104 (GHKR…GRAE). The tract at residues 112 to 133 (GGLAEADRQEGDDTDGDEEDED) is disordered. The segment covering 123 to 133 (DDTDGDEEDED) has biased composition (acidic residues). 4 WD repeats span residues 144–183 (GHDS…DNNF), 191–230 (EHSG…WGQV), 235–313 (GHEG…KPPP), and 341–380 (MHDL…KPPV). The segment at 377-405 (KPPVHTTSEQDKPDSARETQKANGERTAP) is disordered. Residues 384-400 (SEQDKPDSARETQKANG) show a composition bias toward basic and acidic residues. A WD 7 repeat occupies 438-473 (SQQQNFDNSEMDHANEEEVLLSTGDDGVVRVWTLER).

It belongs to the WD repeat CIA1 family.

Functionally, essential component of the cytosolic iron-sulfur (Fe/S) protein assembly machinery. Required for the maturation of extramitochondrial Fe/S proteins. In Coccidioides immitis (strain RS) (Valley fever fungus), this protein is Probable cytosolic iron-sulfur protein assembly protein 1.